A 49-amino-acid polypeptide reads, in one-letter code: U6-myrmicitoxin-Mri1a (49 aa).

The N-terminal stretch at 1–27 (MNPKALCSFLLATFLLLTVTIMPSVHA) is a signal peptide. Positions 28 to 35 (NAEANADA) are excised as a propeptide.

Post-translationally, contains 1 disulfide bond. In terms of tissue distribution, expressed by the venom gland.

Its subcellular location is the secreted. The protein is U6-myrmicitoxin-Mri1a of Manica rubida (European giant red ant).